The following is a 379-amino-acid chain: Pathogen-associated molecular patterns-induced protein A70 (379 aa).

The chain crosses the membrane as a helical span at residues 7–29 (VASFFTPTTLFLLLNLMIGTIVV). A glycan (N-linked (GlcNAc...) asparagine) is linked at Asn-122. The disordered stretch occupies residues 133-154 (TGSDPHSHSHSHLDLHPDPAPA). The segment covering 137–149 (PHSHSHSHLDLHP) has biased composition (basic and acidic residues). Asn-170 is a glycosylation site (N-linked (GlcNAc...) asparagine). Disordered stretches follow at residues 216 to 238 (PEEDQPTGTGVNSQINPPGLTRA) and 256 to 347 (SDPD…DGVD). Positions 221–231 (PTGTGVNSQIN) are enriched in polar residues. Composition is skewed to basic and acidic residues over residues 256-285 (SDPDLDQKQNPDPVLHEEHKHVRSKSESKK) and 322-335 (SLERRRPDTTRVER).

The protein resides in the membrane. This chain is Pathogen-associated molecular patterns-induced protein A70, found in Arabidopsis thaliana (Mouse-ear cress).